Reading from the N-terminus, the 296-residue chain is tRNA dimethylallyltransferase (296 aa).

Position 2–9 (2–9 (GPTASGKT)) interacts with ATP. 4–9 (TASGKT) provides a ligand contact to substrate. 3 interaction with substrate tRNA regions span residues 27-30 (DSAL), 151-155 (QRLAR), and 232-237 (RCVGYR).

This sequence belongs to the IPP transferase family. As to quaternary structure, monomer. Requires Mg(2+) as cofactor.

It catalyses the reaction adenosine(37) in tRNA + dimethylallyl diphosphate = N(6)-dimethylallyladenosine(37) in tRNA + diphosphate. Catalyzes the transfer of a dimethylallyl group onto the adenine at position 37 in tRNAs that read codons beginning with uridine, leading to the formation of N6-(dimethylallyl)adenosine (i(6)A). The polypeptide is tRNA dimethylallyltransferase (Shewanella pealeana (strain ATCC 700345 / ANG-SQ1)).